Reading from the N-terminus, the 366-residue chain is Peptide chain release factor 2 (366 aa).

Gln-253 is subject to N5-methylglutamine.

It belongs to the prokaryotic/mitochondrial release factor family. Methylated by PrmC. Methylation increases the termination efficiency of RF2.

The protein localises to the cytoplasm. Functionally, peptide chain release factor 2 directs the termination of translation in response to the peptide chain termination codons UGA and UAA. This Yersinia pseudotuberculosis serotype I (strain IP32953) protein is Peptide chain release factor 2.